We begin with the raw amino-acid sequence, 139 residues long: MARTKQTARISTGGKAPRKQLAPKAARQSAPATGGVKKPHRFRPGTVALRDIRKYQKSTEILIRKLPFQRLVREIAQDFKTDLRFQSSAVAALQEAAEAYLVGLFEDTNLCAIHAKRVTIMPKEIQLARRIRGERARGE.

Residues 1–10 (MARTKQTARI) show a composition bias toward polar residues. The disordered stretch occupies residues 1–43 (MARTKQTARISTGGKAPRKQLAPKAARQSAPATGGVKKPHRFR). At lysine 5 the chain carries N6,N6,N6-trimethyllysine; alternate. Residue lysine 5 is modified to N6,N6-dimethyllysine; alternate. Residue lysine 5 is modified to N6-methyllysine; alternate. Serine 11 carries the post-translational modification Phosphoserine. Threonine 12 is modified (phosphothreonine). N6-acetyllysine is present on lysine 15. N6-methyllysine; alternate occurs at positions 19 and 24. An N6-acetyllysine; alternate mark is found at lysine 19 and lysine 24. A Phosphoserine modification is found at serine 29. An N6,N6,N6-trimethyllysine; alternate modification is found at lysine 37. Lysine 37 bears the N6,N6-dimethyllysine; alternate mark. Residue lysine 37 is modified to N6-methyllysine; alternate.

The protein belongs to the histone H3 family. The nucleosome is a histone octamer containing two molecules each of H2A, H2B, H3 and H4 assembled in one H3-H4 heterotetramer and two H2A-H2B heterodimers. The octamer wraps approximately 147 bp of DNA.

The protein resides in the nucleus. The protein localises to the chromosome. Core component of nucleosome. Nucleosomes wrap and compact DNA into chromatin, limiting DNA accessibility to the cellular machineries which require DNA as a template. Histones thereby play a central role in transcription regulation, DNA repair, DNA replication and chromosomal stability. DNA accessibility is regulated via a complex set of post-translational modifications of histones, also called histone code, and nucleosome remodeling. The polypeptide is Histone H3-like 5 (Arabidopsis thaliana (Mouse-ear cress)).